The primary structure comprises 296 residues: Nucleotide-binding protein stu0831 (296 aa).

Residue 13–20 participates in ATP binding; it reads GMSGAGKT. 63-66 lines the GTP pocket; that stretch reads DMRS.

The protein belongs to the RapZ-like family.

In terms of biological role, displays ATPase and GTPase activities. This is Nucleotide-binding protein stu0831 from Streptococcus thermophilus (strain ATCC BAA-250 / LMG 18311).